We begin with the raw amino-acid sequence, 637 residues long: Chaperone protein HtpG (637 aa).

The tract at residues 1–338 (MMELKMHNVK…SPDLPLNISR (338 aa)) is a; substrate-binding. The segment at 339-558 (ETLQNNRVVE…EGAMDLRMER (220 aa)) is b. Positions 493-512 (KFSPEEKDKENKSDEERAEG) are disordered. Residues 559–637 (FLREQNQLNY…LNNLLGKVII (79 aa)) form a c region.

The protein belongs to the heat shock protein 90 family. In terms of assembly, homodimer.

It is found in the cytoplasm. Functionally, molecular chaperone. Has ATPase activity. This is Chaperone protein HtpG from Wolbachia sp. subsp. Brugia malayi (strain TRS).